The sequence spans 172 residues: 18.6 kDa class III heat shock protein (172 aa).

Residues 29 to 54 are disordered; it reads RRSAGDHAHHAAHGHGQHRISGIGGG. Residues 48 to 172 enclose the sHSP domain; that stretch reads ISGIGGGAPV…KTKSVQVTIA (125 aa).

This sequence belongs to the small heat shock protein (HSP20) family. As to quaternary structure, may form oligomeric structures.

The protein resides in the cytoplasm. The polypeptide is 18.6 kDa class III heat shock protein (HSP18.6) (Oryza sativa subsp. japonica (Rice)).